Reading from the N-terminus, the 283-residue chain is Pantothenate synthetase (283 aa).

30–37 is a binding site for ATP; the sequence is MGYLHEGH. Catalysis depends on His37, which acts as the Proton donor. Gln61 contributes to the (R)-pantoate binding site. Position 61 (Gln61) interacts with beta-alanine. 147 to 150 contacts ATP; it reads GQKD. Residue Gln153 coordinates (R)-pantoate. ATP is bound by residues Val176 and 184–187; that span reads MSSR.

The protein belongs to the pantothenate synthetase family. In terms of assembly, homodimer.

It is found in the cytoplasm. The catalysed reaction is (R)-pantoate + beta-alanine + ATP = (R)-pantothenate + AMP + diphosphate + H(+). The protein operates within cofactor biosynthesis; (R)-pantothenate biosynthesis; (R)-pantothenate from (R)-pantoate and beta-alanine: step 1/1. Its function is as follows. Catalyzes the condensation of pantoate with beta-alanine in an ATP-dependent reaction via a pantoyl-adenylate intermediate. The sequence is that of Pantothenate synthetase from Thermoanaerobacter pseudethanolicus (strain ATCC 33223 / 39E) (Clostridium thermohydrosulfuricum).